The primary structure comprises 567 residues: Pyrethroid hydrolase Ces2e (567 aa).

Positions M1–G36 are cleaved as a signal peptide. The residue at position 37 (Q37) is a Pyrrolidone carboxylic acid. Residues C105 and C132 are joined by a disulfide bond. Residue S237 is the Acyl-ester intermediate of the active site. Cysteines 289 and 300 form a disulfide. Catalysis depends on charge relay system residues E354 and H465.

This sequence belongs to the type-B carboxylesterase/lipase family. Expressed in liver.

The protein localises to the microsome. It catalyses the reaction all-trans-retinyl hexadecanoate + H2O = all-trans-retinol + hexadecanoate + H(+). The catalysed reaction is (-)-trans-permethrin + H2O = (3-phenoxyphenyl)methanol + (1S,3R)-3-(2,2-dichlorovinyl)-2,2-dimethylcyclopropanecarboxylate + H(+). Functionally, carboxylesterase that catalyzes the hydrolysis of pyrethroids pesticides. Hydrolyzes trans-permethrin at a rate about 22-fold higher than cis-permethrin. Also hydrolyzes trans-cypermethrin. Hydrolyzes retinyl esters. The chain is Pyrethroid hydrolase Ces2e from Rattus norvegicus (Rat).